We begin with the raw amino-acid sequence, 443 residues long: Inactive polypeptide N-acetylgalactosaminyltransferase-like protein 5 (443 aa).

Residues 1–4 (MRNA) lie on the Cytoplasmic side of the membrane. Residues 5 to 27 (IIRCLFYGSLTFGIWTALLFIYL) form a helical; Signal-anchor for type II membrane protein membrane-spanning segment. Over 28–443 (HHNHVSNWQK…PELEASVNRS (416 aa)) the chain is Lumenal. N87 carries an N-linked (GlcNAc...) asparagine glycan. Disulfide bonds link C124–C355 and C346–C422. The catalytic subdomain A stretch occupies residues 133 to 243 (LPTASIVICF…RVWLEPLLHA (111 aa)). Substrate contacts are provided by D174 and R204. D227 provides a ligand contact to Mn(2+). S228 is a substrate binding site. Residue H229 participates in Mn(2+) binding. The interval 301 to 363 (PIRSPAMSGG…PCSRVGHISK (63 aa)) is catalytic subdomain B. W332 serves as a coordination point for substrate. Position 360 (H360) interacts with Mn(2+).

It belongs to the glycosyltransferase 2 family. GalNAc-T subfamily. Mn(2+) is required as a cofactor. As to expression, expressed in testis.

It localises to the late endosome membrane. Functionally, probable inactive glycosyltransferase required during spermatid development. May participate in protein loading into the acrosomes and accumulation of ubiquitin-proteasome systems around the head-tail coupling apparatus region. This is Inactive polypeptide N-acetylgalactosaminyltransferase-like protein 5 (GALNTL5) from Macaca fascicularis (Crab-eating macaque).